Consider the following 618-residue polypeptide: MKQSKLLIPTLREMPSDAQVISHALMVRAGYVRQVSAGIYAYLPLANRTIEKFKTIMREEFEKIGAVEMLAPALLTADLWRESGRYETYGEDLYKLKNRDNSDFILGPTHEETFTTLVRDAVKSYKQLPLNLYQIQSKYRDEKRPRNGLLRTREFIMKDGYSFHHNYEDLDVTYEDYRQAYEAIFTRAGLDFKGIIGDGGAMGGKDSQEFMAITPARTDLDRWVVLDKSIASMDDIPKEVLEEIKAELAAWMISGEDTIAYSTESSYAANLEMATNEYKPSSKVAAEDALAEVETPHCKTIDEVAAFLSVDETQTIKTLLFVADNEPVVALLVGNDHINTVKLKNYLAADFLEPASEEEARAFFGAGFGSLGPVNLAQGSRIVADRKVQNLTNAVAGANKDGFHVTGVNPGRDFQAEYVDIREVKEGEMSPDGHGVLQFARGIEVGHIFKLGTRYSDSMGAKILDENGRAVPIVMGCYGIGVSRILSAVIEQHARLFVNKTPKGDYRYAWGINFPKELAPFDVHLITVNVKDQAAQDLTAKLEADLMAKGYDVLTDDRNERVGSKFSDSDLIGLPIRVTVGKKAAEGIVEIKIKATGDSIEVNAENLIETLEILTKEH.

This sequence belongs to the class-II aminoacyl-tRNA synthetase family. ProS type 1 subfamily. As to quaternary structure, homodimer.

Its subcellular location is the cytoplasm. It catalyses the reaction tRNA(Pro) + L-proline + ATP = L-prolyl-tRNA(Pro) + AMP + diphosphate. Catalyzes the attachment of proline to tRNA(Pro) in a two-step reaction: proline is first activated by ATP to form Pro-AMP and then transferred to the acceptor end of tRNA(Pro). As ProRS can inadvertently accommodate and process non-cognate amino acids such as alanine and cysteine, to avoid such errors it has two additional distinct editing activities against alanine. One activity is designated as 'pretransfer' editing and involves the tRNA(Pro)-independent hydrolysis of activated Ala-AMP. The other activity is designated 'posttransfer' editing and involves deacylation of mischarged Ala-tRNA(Pro). The misacylated Cys-tRNA(Pro) is not edited by ProRS. The sequence is that of Proline--tRNA ligase from Streptococcus pyogenes serotype M5 (strain Manfredo).